A 451-amino-acid chain; its full sequence is UDP-N-acetylmuramoylalanine--D-glutamate ligase (451 aa).

119–125 (GSNGKTT) is a binding site for ATP.

Belongs to the MurCDEF family.

It is found in the cytoplasm. It catalyses the reaction UDP-N-acetyl-alpha-D-muramoyl-L-alanine + D-glutamate + ATP = UDP-N-acetyl-alpha-D-muramoyl-L-alanyl-D-glutamate + ADP + phosphate + H(+). The protein operates within cell wall biogenesis; peptidoglycan biosynthesis. Cell wall formation. Catalyzes the addition of glutamate to the nucleotide precursor UDP-N-acetylmuramoyl-L-alanine (UMA). The protein is UDP-N-acetylmuramoylalanine--D-glutamate ligase of Streptococcus mutans serotype c (strain ATCC 700610 / UA159).